The sequence spans 430 residues: 26S protease regulatory subunit 6A (430 aa).

218-225 (GPPGTGKT) contacts ATP.

Belongs to the AAA ATPase family. In terms of assembly, component of the 19S proteasome regulatory particle complex. The 26S proteasome consists of a 20S core particle (CP) and two 19S regulatory subunits (RP). The regulatory particle is made of a lid composed of 9 subunits, a base containing 6 ATPases including the PSMC3 homolog rpt-5 and few additional components.

The protein localises to the cytoplasm. Its subcellular location is the nucleus. Its function is as follows. Component of the 26S proteasome, a multiprotein complex involved in the ATP-dependent degradation of ubiquitinated proteins. This complex plays a key role in the maintenance of protein homeostasis by removing misfolded or damaged proteins, which could impair cellular functions, and by removing proteins whose functions are no longer required. Therefore, the proteasome participates in numerous cellular processes, including cell cycle progression, apoptosis, or DNA damage repair. Belongs to the heterohexameric ring of AAA (ATPases associated with diverse cellular activities) proteins that unfolds ubiquitinated target proteins that are concurrently translocated into a proteolytic chamber and degraded into peptides. The sequence is that of 26S protease regulatory subunit 6A from Caenorhabditis elegans.